The primary structure comprises 267 residues: tRNA pseudouridine synthase A (267 aa).

The active-site Nucleophile is the Asp-52. A substrate-binding site is contributed by Tyr-113.

This sequence belongs to the tRNA pseudouridine synthase TruA family. Homodimer.

It carries out the reaction uridine(38/39/40) in tRNA = pseudouridine(38/39/40) in tRNA. Functionally, formation of pseudouridine at positions 38, 39 and 40 in the anticodon stem and loop of transfer RNAs. The polypeptide is tRNA pseudouridine synthase A (Chlamydia pneumoniae (Chlamydophila pneumoniae)).